Consider the following 498-residue polypeptide: ATP synthase subunit beta, chloroplastic (498 aa).

172–179 contacts ATP; that stretch reads GGAGVGKT.

The protein belongs to the ATPase alpha/beta chains family. F-type ATPases have 2 components, CF(1) - the catalytic core - and CF(0) - the membrane proton channel. CF(1) has five subunits: alpha(3), beta(3), gamma(1), delta(1), epsilon(1). CF(0) has four main subunits: a(1), b(1), b'(1) and c(9-12).

It is found in the plastid. The protein resides in the chloroplast thylakoid membrane. The enzyme catalyses ATP + H2O + 4 H(+)(in) = ADP + phosphate + 5 H(+)(out). Its function is as follows. Produces ATP from ADP in the presence of a proton gradient across the membrane. The catalytic sites are hosted primarily by the beta subunits. The protein is ATP synthase subunit beta, chloroplastic of Gossypium barbadense (Sea Island cotton).